The chain runs to 113 residues: UPF0122 protein MCAP_0480 (113 aa).

This sequence belongs to the UPF0122 family.

Its function is as follows. Might take part in the signal recognition particle (SRP) pathway. This is inferred from the conservation of its genetic proximity to ftsY/ffh. May be a regulatory protein. This chain is UPF0122 protein MCAP_0480, found in Mycoplasma capricolum subsp. capricolum (strain California kid / ATCC 27343 / NCTC 10154).